Consider the following 363-residue polypeptide: Beta-1,3-N-acetylglucosaminyltransferase lunatic fringe (363 aa).

Over 1–8 (MLKSCGRK) the chain is Cytoplasmic. Residues 9-29 (LLLSLVGSMFTCLLVLMVEPP) form a helical; Signal-anchor for type II membrane protein membrane-spanning segment. The Lumenal portion of the chain corresponds to 30–363 (GRPGLARGEA…TPWCPSNVVY (334 aa)). Position 113 (Arg113) interacts with substrate. A glycan (N-linked (GlcNAc...) asparagine) is linked at Asn151. 2 disulfide bridges follow: Cys152–Cys163 and Cys181–Cys244. Residue Asp185 participates in substrate binding. Asp186 contributes to the Mn(2+) binding site. Residue Asp274 is part of the active site. Residue His298 coordinates Mn(2+). A disulfide bridge connects residues Cys348 and Cys357.

This sequence belongs to the glycosyltransferase 31 family. Mn(2+) serves as cofactor. The cofactor is Co(2+). A soluble form may be derived from the membrane form by proteolytic processing.

Its subcellular location is the golgi apparatus membrane. It catalyses the reaction 3-O-(alpha-L-fucosyl)-L-threonyl-[EGF-like domain protein] + UDP-N-acetyl-alpha-D-glucosamine = 3-O-(N-acetyl-beta-D-glucosaminyl-(1-&gt;3)-alpha-L-fucosyl)-L-threonyl-[EGF-like domain protein] + UDP + H(+). It carries out the reaction 3-O-(alpha-L-fucosyl)-L-seryl-[EGF-like domain protein] + UDP-N-acetyl-alpha-D-glucosamine = 3-O-(N-acetyl-beta-D-glucosaminyl-(1-&gt;3)-alpha-L-fucosyl)-L-seryl-[EGF-like domain protein] + UDP + H(+). Glycosyltransferase that initiates the elongation of O-linked fucose residues attached to EGF-like repeats in the extracellular domain of Notch molecules. Essential mediator of somite segmentation and patterning. This Gallus gallus (Chicken) protein is Beta-1,3-N-acetylglucosaminyltransferase lunatic fringe (LFNG).